The chain runs to 308 residues: CMP-N-acetylneuraminate:beta-galactoside alpha-2,3-sialyltransferase (308 aa).

The active-site Proton acceptor is the aspartate 201. Residues 221–225 (LPHPR), 242–243 (FE), and 262–263 (SS) contribute to the CMP-N-acetyl-beta-neuraminate site. Histidine 223 functions as the Proton donor in the catalytic mechanism.

Belongs to the glycosyltransferase 52 family. Divalent metal cations are not required for the alpha-2,3-sialyltransferase activity. is required as a cofactor.

Catalyzes the transfer of sialic acid from the substrate CMP-N-acetylneuraminate to lactosyl lipids as preferred acceptor substrates in vitro, forming alpha-2,3-linked sialosides. Beta-1,4-linked galactosyl lipids are better substrates than beta-1,3-linked galactosyl lipids. The natural acceptor substrate may be cell surface oligosaccharides in lipooligosaccharide (LOS), whose sialylation has been demonstrated vital for the virulence of P.multocida. This is CMP-N-acetylneuraminate:beta-galactoside alpha-2,3-sialyltransferase (lst) from Pasteurella multocida (strain Pm70).